Consider the following 455-residue polypeptide: Bifunctional protein GlmU (455 aa).

Residues 1–229 (MYNCAILLAA…FEETMGVNSR (229 aa)) form a pyrophosphorylase region. UDP-N-acetyl-alpha-D-glucosamine contacts are provided by residues 8–11 (LAAG), Lys-22, Gln-73, and 78–79 (GT). Asp-103 is a Mg(2+) binding site. 4 residues coordinate UDP-N-acetyl-alpha-D-glucosamine: Gly-140, Glu-155, Asn-170, and Asn-227. Residue Asn-227 participates in Mg(2+) binding. Positions 230 to 250 (LQLAEVEAIMRKRINAMHLEN) are linker. Residues 251-455 (GVTIIDPNNT…EDWVKKKDEK (205 aa)) are N-acetyltransferase. Positions 332 and 350 each coordinate UDP-N-acetyl-alpha-D-glucosamine. The Proton acceptor role is filled by His-362. UDP-N-acetyl-alpha-D-glucosamine-binding residues include Tyr-365 and Asn-376. Acetyl-CoA is bound by residues 385-386 (NY), Ala-422, and Arg-439.

This sequence in the N-terminal section; belongs to the N-acetylglucosamine-1-phosphate uridyltransferase family. In the C-terminal section; belongs to the transferase hexapeptide repeat family. In terms of assembly, homotrimer. It depends on Mg(2+) as a cofactor.

It is found in the cytoplasm. The enzyme catalyses alpha-D-glucosamine 1-phosphate + acetyl-CoA = N-acetyl-alpha-D-glucosamine 1-phosphate + CoA + H(+). The catalysed reaction is N-acetyl-alpha-D-glucosamine 1-phosphate + UTP + H(+) = UDP-N-acetyl-alpha-D-glucosamine + diphosphate. It functions in the pathway nucleotide-sugar biosynthesis; UDP-N-acetyl-alpha-D-glucosamine biosynthesis; N-acetyl-alpha-D-glucosamine 1-phosphate from alpha-D-glucosamine 6-phosphate (route II): step 2/2. Its pathway is nucleotide-sugar biosynthesis; UDP-N-acetyl-alpha-D-glucosamine biosynthesis; UDP-N-acetyl-alpha-D-glucosamine from N-acetyl-alpha-D-glucosamine 1-phosphate: step 1/1. The protein operates within bacterial outer membrane biogenesis; LPS lipid A biosynthesis. In terms of biological role, catalyzes the last two sequential reactions in the de novo biosynthetic pathway for UDP-N-acetylglucosamine (UDP-GlcNAc). The C-terminal domain catalyzes the transfer of acetyl group from acetyl coenzyme A to glucosamine-1-phosphate (GlcN-1-P) to produce N-acetylglucosamine-1-phosphate (GlcNAc-1-P), which is converted into UDP-GlcNAc by the transfer of uridine 5-monophosphate (from uridine 5-triphosphate), a reaction catalyzed by the N-terminal domain. The chain is Bifunctional protein GlmU from Clostridium tetani (strain Massachusetts / E88).